The chain runs to 268 residues: Small ribosomal subunit protein eS1 (268 aa).

Positions 1–21 (MAVGKNKGLSKGGKKGGKKKV) are disordered.

Belongs to the eukaryotic ribosomal protein eS1 family. Component of the small ribosomal subunit. Mature ribosomes consist of a small (40S) and a large (60S) subunit. The 40S subunit contains about 33 different proteins and 1 molecule of RNA (18S). The 60S subunit contains about 49 different proteins and 3 molecules of RNA (28S, 5.8S and 5S).

Its subcellular location is the cytoplasm. In terms of biological role, essential for oogenesis; required for late follicle cell development. This is Small ribosomal subunit protein eS1 from Drosophila persimilis (Fruit fly).